The chain runs to 555 residues: Hydroxylamine reductase (555 aa).

Residues C3, C6, C18, and C25 each coordinate [4Fe-4S] cluster. H252, E276, C320, C407, C435, C460, E494, and K496 together coordinate hybrid [4Fe-2O-2S] cluster. C407 carries the post-translational modification Cysteine persulfide.

It belongs to the HCP family. It depends on [4Fe-4S] cluster as a cofactor. Hybrid [4Fe-2O-2S] cluster serves as cofactor.

The protein resides in the cytoplasm. It catalyses the reaction A + NH4(+) + H2O = hydroxylamine + AH2 + H(+). Its function is as follows. Catalyzes the reduction of hydroxylamine to form NH(3) and H(2)O. This Burkholderia ambifaria (strain MC40-6) protein is Hydroxylamine reductase.